The primary structure comprises 351 residues: Transcriptional activator POG1 (351 aa).

Residues 1–27 are compositionally biased toward basic and acidic residues; it reads MKQEPHRQSEEKEKPKGPMAVEREHHT. A disordered region spans residues 1–56; sequence MKQEPHRQSEEKEKPKGPMAVEREHHTSLSSGTTMTASTGDESTNSRPVESSQTEK. Over residues 28-56 the composition is skewed to polar residues; the sequence is SLSSGTTMTASTGDESTNSRPVESSQTEK. Serine 152 and serine 168 each carry phosphoserine. Disordered stretches follow at residues 237 to 256 and 280 to 351; these read GPQA…TPVM and SMGP…PPPT. Composition is skewed to polar residues over residues 241 to 256 and 287 to 296; these read QLPT…TPVM and IYGQQHQPQP. A Phosphoserine modification is found at serine 314.

This sequence belongs to the POG1 family. Post-translationally, phosphorylated by CDC28.

It is found in the nucleus. Functionally, transcriptional activator which promotes cell cycle recovery with CLN2, after pheromone induced G1 arrest, probably inhibiting the ability of STE20 to activate the pheromone response pathway. Binds the promoters of genes that function in cell cycle regulation, cytoskeletal organization, and spindle assembly. May also be involved in stress-resistance. The polypeptide is Transcriptional activator POG1 (POG1) (Saccharomyces cerevisiae (strain YJM789) (Baker's yeast)).